A 757-amino-acid polypeptide reads, in one-letter code: Catalase-peroxidase (757 aa).

A cross-link (tryptophyl-tyrosyl-methioninium (Trp-Tyr) (with M-274)) is located at residues 101–248; sequence WHSAGTYRIG…LAAVQMGLIY (148 aa). Catalysis depends on His-102, which acts as the Proton acceptor. The disordered stretch occupies residues 210–231; that stretch reads SEGVHHPDEHSGAKEKASKNSD. The segment covering 212–231 has biased composition (basic and acidic residues); it reads GVHHPDEHSGAKEKASKNSD. The segment at residues 248-274 is a cross-link (tryptophyl-tyrosyl-methioninium (Tyr-Met) (with W-101)); sequence YVNPEGPDGRPDPLASARDIRETFARM. Position 289 (His-289) interacts with heme b. The disordered stretch occupies residues 293-312; it reads KTHGAAPADNVGPEPEAGEL.

The protein belongs to the peroxidase family. Peroxidase/catalase subfamily. As to quaternary structure, homodimer or homotetramer. Heme b is required as a cofactor. Formation of the three residue Trp-Tyr-Met cross-link is important for the catalase, but not the peroxidase activity of the enzyme.

It catalyses the reaction H2O2 + AH2 = A + 2 H2O. The catalysed reaction is 2 H2O2 = O2 + 2 H2O. Functionally, bifunctional enzyme with both catalase and broad-spectrum peroxidase activity. This Xylella fastidiosa (strain M12) protein is Catalase-peroxidase.